A 261-amino-acid polypeptide reads, in one-letter code: uncharacterized protein (261 aa).

3 helical membrane-spanning segments follow: residues 15–35 (WYSV…IIVC), 87–107 (VYLI…IRNA), and 131–151 (LLLY…YFLI). Basic and acidic residues predominate over residues 234-246 (LEEKKAKRRQNAE). The tract at residues 234 to 261 (LEEKKAKRRQNAERRKKRREIAMEQREQ) is disordered.

It localises to the membrane. This is an uncharacterized protein from Caenorhabditis elegans.